The primary structure comprises 295 residues: Acetylglutamate kinase (295 aa).

Substrate-binding positions include 66 to 67 (GG), R88, and N193.

It belongs to the acetylglutamate kinase family. ArgB subfamily.

The protein resides in the cytoplasm. It catalyses the reaction N-acetyl-L-glutamate + ATP = N-acetyl-L-glutamyl 5-phosphate + ADP. It participates in amino-acid biosynthesis; L-arginine biosynthesis; N(2)-acetyl-L-ornithine from L-glutamate: step 2/4. In terms of biological role, catalyzes the ATP-dependent phosphorylation of N-acetyl-L-glutamate. The protein is Acetylglutamate kinase of Gluconobacter oxydans (strain 621H) (Gluconobacter suboxydans).